Here is a 737-residue protein sequence, read N- to C-terminus: Probable serine/threonine-protein kinase DDB_G0269628 (737 aa).

The Protein kinase domain occupies 8 to 488 (YKLIKDLRSG…TLQKMDTSLL (481 aa)). Residues 14–22 (LRSGGEGKA) and Lys-36 contribute to the ATP site. 2 disordered regions span residues 155–251 (NTIQ…KKCS) and 278–298 (TTAA…SSSN). The segment covering 156–167 (TIQHSHSSSSLV) has biased composition (polar residues). Positions 168–229 (NGTTSPTNAT…PSSPSSPLSP (62 aa)) are enriched in low complexity. Asp-349 acts as the Proton acceptor in catalysis.

Belongs to the protein kinase superfamily. NEK Ser/Thr protein kinase family. NIMA subfamily.

It catalyses the reaction L-seryl-[protein] + ATP = O-phospho-L-seryl-[protein] + ADP + H(+). It carries out the reaction L-threonyl-[protein] + ATP = O-phospho-L-threonyl-[protein] + ADP + H(+). This chain is Probable serine/threonine-protein kinase DDB_G0269628, found in Dictyostelium discoideum (Social amoeba).